Consider the following 327-residue polypeptide: MVVELKNIEKIYENGFHALKGVNLELKKGDILGVIGYSGAGKSTLIRLINCLERPSSGEVLVNGVNLLKLKPKELQKARQKIGMIFQHFNLLSAKNVFENVAFALEIARWEKNKIKSRVHELLELVGLEDKMHFYPKQLSGGQKQRVAIARSLANCPDLLLCDEATSALDSKTTHSILTLLSGIQKKLDLSIVFITHEIEVVKELCNQMCVISSGEIVERGSVEEIFANPKHAVTKELLGIRNEHADKKSQDVYRIVFLGEHLDEPIISNLIKRFKIDVSIISGNIEELTTKDIGYLVVRFLGNTAETQRALEYLNALGLQVEKLKD.

The ABC transporter domain occupies 3 to 239 (VELKNIEKIY…PKHAVTKELL (237 aa)). 36-43 (GYSGAGKS) contributes to the ATP binding site.

It belongs to the ABC transporter superfamily. Methionine importer (TC 3.A.1.24) family. The complex is composed of two ATP-binding proteins (MetN), two transmembrane proteins (MetI) and a solute-binding protein (MetQ).

Its subcellular location is the cell inner membrane. The enzyme catalyses L-methionine(out) + ATP + H2O = L-methionine(in) + ADP + phosphate + H(+). The catalysed reaction is D-methionine(out) + ATP + H2O = D-methionine(in) + ADP + phosphate + H(+). Functionally, part of the ABC transporter complex MetNIQ involved in methionine import. Responsible for energy coupling to the transport system. The polypeptide is Methionine import ATP-binding protein MetN (Helicobacter pylori (strain ATCC 700392 / 26695) (Campylobacter pylori)).